We begin with the raw amino-acid sequence, 199 residues long: Probable chemoreceptor glutamine deamidase CheD (199 aa).

This sequence belongs to the CheD family.

It carries out the reaction L-glutaminyl-[protein] + H2O = L-glutamyl-[protein] + NH4(+). Probably deamidates glutamine residues to glutamate on methyl-accepting chemotaxis receptors (MCPs), playing an important role in chemotaxis. This chain is Probable chemoreceptor glutamine deamidase CheD, found in Cereibacter sphaeroides (Rhodobacter sphaeroides).